The primary structure comprises 101 residues: MVSLLCCGPKLAACGIVISVWGVIMLILLGVFFNVHSAVLIEDVPFTEEDIFEDPNPPAKMYRLYEQVSYNCFIAAAIYIVLGGFSFCQVRLNKRKEYMVR.

2 helical membrane passes run alanine 13 to phenylalanine 33 and valine 68 to cysteine 88.

The protein belongs to the RNase K family.

The protein localises to the membrane. Endoribonuclease which preferentially cleaves ApU and ApG phosphodiester bonds. This Xenopus laevis (African clawed frog) protein is Ribonuclease kappa-A (rnasek-a).